Consider the following 202-residue polypeptide: GTP-binding protein rho1 (202 aa).

13 to 20 (GDGACGKT) contributes to the GTP binding site. The short motif at 35 to 43 (YVPTVFENY) is the Effector region element. GTP contacts are provided by residues 60-64 (DTAGQ) and 118-121 (CKAD). Position 199 is a cysteine methyl ester (C199). Residue C199 is the site of S-geranylgeranyl cysteine attachment. The propeptide at 200–202 (ILL) is removed in mature form.

This sequence belongs to the small GTPase superfamily. Rho family.

Its subcellular location is the cell membrane. In terms of biological role, involved in the regulation of cell wall growth and actin cytoskeleton organization. Activates (1,3)-beta-D-glucan synthase. This chain is GTP-binding protein rho1 (rho1), found in Schizosaccharomyces pombe (strain 972 / ATCC 24843) (Fission yeast).